A 290-amino-acid polypeptide reads, in one-letter code: Inorganic pyrophosphatase (290 aa).

Arg81 serves as a coordination point for diphosphate. The Mg(2+) site is built by Asp118, Asp123, and Asp155.

This sequence belongs to the PPase family. Mg(2+) is required as a cofactor.

The protein resides in the cytoplasm. It carries out the reaction diphosphate + H2O = 2 phosphate + H(+). The polypeptide is Inorganic pyrophosphatase (ipp-1) (Neurospora crassa (strain ATCC 24698 / 74-OR23-1A / CBS 708.71 / DSM 1257 / FGSC 987)).